We begin with the raw amino-acid sequence, 286 residues long: NAD kinase (286 aa).

Residue D68 is the Proton acceptor of the active site. NAD(+) contacts are provided by residues 68-69, K73, 142-143, R153, D172, 183-188, and Q242; these read DG, ND, and TGYSFS.

Belongs to the NAD kinase family. The cofactor is a divalent metal cation.

The protein resides in the cytoplasm. The enzyme catalyses NAD(+) + ATP = ADP + NADP(+) + H(+). Functionally, involved in the regulation of the intracellular balance of NAD and NADP, and is a key enzyme in the biosynthesis of NADP. Catalyzes specifically the phosphorylation on 2'-hydroxyl of the adenosine moiety of NAD to yield NADP. The polypeptide is NAD kinase (Natranaerobius thermophilus (strain ATCC BAA-1301 / DSM 18059 / JW/NM-WN-LF)).